Reading from the N-terminus, the 503-residue chain is SH2 domain-containing adapter protein B (503 aa).

Disordered regions lie at residues 1-49 (MAKW…QACS) and 61-81 (CFSA…DLIR). The residue at position 101 (Ser101) is a Phosphoserine. The span at 147–157 (AAASSSSSSGS) shows a compositional bias: low complexity. Residues 147–180 (AAASSSSSSGSPHLYRSSSERRPTTPAEVRYISP) are disordered. Lys186 participates in a covalent cross-link: Glycyl lysine isopeptide (Lys-Gly) (interchain with G-Cter in SUMO2). Disordered regions lie at residues 225 to 262 (ETGA…SAGY), 292 to 333 (DTPY…YDQP), and 345 to 381 (AAQF…IKHG). The span at 244–256 (FDAKSDLKSKAGK) shows a compositional bias: basic and acidic residues. A phosphoserine mark is found at Ser301 and Ser311. Over residues 301 to 311 (SVDSDSESTVS) the composition is skewed to polar residues. Basic and acidic residues predominate over residues 313 to 328 (RLRESKLPQDDDRPAD). Ser382 is modified (phosphoserine). An SH2 domain is found at 404-498 (WYHGAISRSD…AEHLSLLYPV (95 aa)).

As to quaternary structure, interacts with phosphorylated 'Tyr-720' of the ligand-activated receptor PDGFRA via its SH2 domain. Interacts with the ligand-activated receptors PDGFRB, FGFR1, KDR/VEGFR2, IL2RB and IL2RG. Interacts with EPS8 and V-SRC. Interacts with GRB2 and GRAP. Interacts with CD3Z. Interacts with tyrosine-phosphorylated LAT upon T-cell antigen receptor activation. Interacts with PLCG1. Interacts with ZAP70, LCP2/SLP-76, VAV1 and GRAP2. Interacts with JAK1 and JAK3. Interacts with PTK2/FAK1. Interacts with CRK/CrKII. Interacts with IRS2. Interacts with PTPN11. In terms of processing, phosphorylated upon PDGFRA, PDGFRB, TCR, IL2 receptor, FGFR1 or VEGFR2 activation. In terms of tissue distribution, expressed in heart, liver, brain and kidney (at protein level).

The protein resides in the cytoplasm. The protein localises to the cell membrane. Its function is as follows. Adapter protein which regulates several signal transduction cascades by linking activated receptors to downstream signaling components. May play a role in angiogenesis by regulating FGFR1, VEGFR2 and PDGFR signaling. May also play a role in T-cell antigen receptor/TCR signaling, interleukin-2 signaling, apoptosis and neuronal cells differentiation by mediating basic-FGF and NGF-induced signaling cascades. May also regulate IRS1 and IRS2 signaling in insulin-producing cells. This Mus musculus (Mouse) protein is SH2 domain-containing adapter protein B (Shb).